The primary structure comprises 65 residues: Large ribosomal subunit protein bL35 (65 aa).

This sequence belongs to the bacterial ribosomal protein bL35 family.

The polypeptide is Large ribosomal subunit protein bL35 (Synechococcus sp. (strain WH7803)).